The chain runs to 89 residues: Sec translocon accessory complex subunit YrbF (89 aa).

Residues 4–24 (GTLGTLVPIILMFAVLYFLLI) form a helical membrane-spanning segment.

The protein belongs to the YajC family. In terms of assembly, part of the SecDF-YidC-YajC translocase complex. The SecDF-YidC-YajC translocase forms a supercomplex with SecYEG, called the holo-translocon (HTL).

The protein resides in the cell membrane. Functionally, the SecYEG-SecDF-YajC-YidC holo-translocon (HTL) protein secretase/insertase is a supercomplex required for protein secretion, insertion of proteins into membranes, and assembly of membrane protein complexes. While the SecYEG complex is essential for assembly of a number of proteins and complexes, the SecDF-YajC-YidC subcomplex facilitates these functions. The polypeptide is Sec translocon accessory complex subunit YrbF (yrbF) (Bacillus subtilis (strain 168)).